The sequence spans 309 residues: tRNA uridine(34) hydroxylase (309 aa).

Residues 123–217 form the Rhodanese domain; that stretch reads DDPEVIVVDT…YLEEVPEEQT (95 aa). Cys-177 functions as the Cysteine persulfide intermediate in the catalytic mechanism.

This sequence belongs to the TrhO family.

The enzyme catalyses uridine(34) in tRNA + AH2 + O2 = 5-hydroxyuridine(34) in tRNA + A + H2O. Catalyzes oxygen-dependent 5-hydroxyuridine (ho5U) modification at position 34 in tRNAs. The chain is tRNA uridine(34) hydroxylase from Saccharophagus degradans (strain 2-40 / ATCC 43961 / DSM 17024).